Reading from the N-terminus, the 180-residue chain is MGLTVSALFSRIFGKKQMRILMVGLDAAGKTTILYKLKLGEIVTTIPTIGFNVETVEYKNICFTVWDVGGQDKIRPLWRHYFQNTQGLIFVVDSNDRERVQESADELQKMLQEDELRDAVLLVFANKQDMPNAMPVSELTDKLGLQHLRSRTWYVQATCATQGTGLYDGLDWLSHELSKR.

The N-myristoyl glycine moiety is linked to residue Gly2. GTP contacts are provided by residues Gly24–Thr31, Asp67–Gln71, and Asn126–Asp129.

Belongs to the small GTPase superfamily. Arf family. Interacts (when activated) with GGA1, GGA2 and GGA3; the interaction is required for proper subcellular location of GGA1, GGA2 and GGA3. Binds ASAP2. Interacts with NCS1/FREQ at the Golgi complex. Interacts with RAB11FIP3 and RAB11FIP4.

It localises to the golgi apparatus. The protein localises to the cytoplasm. The protein resides in the perinuclear region. Its subcellular location is the membrane. It is found in the trans-Golgi network membrane. Functionally, GTP-binding protein involved in protein trafficking; may modulate vesicle budding and uncoating within the Golgi apparatus. (Microbial infection) Functions as an allosteric activator of the cholera toxin catalytic subunit, an ADP-ribosyltransferase. This is ADP-ribosylation factor 5 (ARF5) from Homo sapiens (Human).